Reading from the N-terminus, the 195-residue chain is Porimin (195 aa).

Residues 1–23 form the signal peptide; it reads MALCARAALLLGVLQVLALLGAA. The Extracellular portion of the chain corresponds to 24-152; the sequence is QDPTDAQGSA…PTKGKGSKFD (129 aa). N-linked (GlcNAc...) asparagine glycans are attached at residues Asn-36, Asn-45, Asn-51, Asn-59, Asn-109, and Asn-115. The interval 99–127 is disordered; the sequence is VTPTASKSTPNASASPNSTHTSASMTTPA. Positions 101–126 are enriched in polar residues; that stretch reads PTASKSTPNASASPNSTHTSASMTTP. A helical membrane pass occupies residues 153–173; that stretch reads AGSFVGGIVLTLGVLSILYIG. At 174 to 195 the chain is on the cytoplasmic side; the sequence is CKMYYSRRGIRYRSIDEHDAII. Ser-187 carries the post-translational modification Phosphoserine.

It belongs to the CD164 family.

It localises to the membrane. In terms of biological role, implicated in oncotic cell death, characterized by cell swelling, organelle swelling, vacuolization and increased membrane permeability. The chain is Porimin (Tmem123) from Mus musculus (Mouse).